Here is a 291-residue protein sequence, read N- to C-terminus: Phosphatidylglycerol--prolipoprotein diacylglyceryl transferase (291 aa).

The next 7 helical transmembrane spans lie at 21–41 (VSLH…MWLA), 60–80 (LLYA…VLFY), 96–116 (WDGG…MIWF), 130–150 (FIAP…FING), 198–218 (SQLY…NLFI), 225–245 (GAVS…VEFF), and 260–280 (ISMG…MMIW). An a 1,2-diacyl-sn-glycero-3-phospho-(1'-sn-glycerol)-binding site is contributed by Arg-143.

This sequence belongs to the Lgt family.

The protein resides in the cell inner membrane. It carries out the reaction L-cysteinyl-[prolipoprotein] + a 1,2-diacyl-sn-glycero-3-phospho-(1'-sn-glycerol) = an S-1,2-diacyl-sn-glyceryl-L-cysteinyl-[prolipoprotein] + sn-glycerol 1-phosphate + H(+). It functions in the pathway protein modification; lipoprotein biosynthesis (diacylglyceryl transfer). Its function is as follows. Catalyzes the transfer of the diacylglyceryl group from phosphatidylglycerol to the sulfhydryl group of the N-terminal cysteine of a prolipoprotein, the first step in the formation of mature lipoproteins. In Cronobacter sakazakii (strain ATCC BAA-894) (Enterobacter sakazakii), this protein is Phosphatidylglycerol--prolipoprotein diacylglyceryl transferase.